We begin with the raw amino-acid sequence, 887 residues long: DNA mismatch repair protein MutS (887 aa).

602-609 (GPNMSGKS) is an ATP binding site.

The protein belongs to the DNA mismatch repair MutS family.

This protein is involved in the repair of mismatches in DNA. It is possible that it carries out the mismatch recognition step. This protein has a weak ATPase activity. The sequence is that of DNA mismatch repair protein MutS from Staphylococcus saprophyticus subsp. saprophyticus (strain ATCC 15305 / DSM 20229 / NCIMB 8711 / NCTC 7292 / S-41).